Consider the following 362-residue polypeptide: Glutaminyl-peptide cyclotransferase (362 aa).

Residues Met1–Ala35 form the signal peptide. 2 N-linked (GlcNAc...) asparagine glycosylation sites follow: Asn29 and Asn50. The cysteines at positions 140 and 165 are disulfide-linked. Position 160 (Asp160) interacts with Zn(2+). The active-site Proton acceptor is the Glu202. Residue Glu203 participates in Zn(2+) binding. Asp249 functions as the Proton acceptor in the catalytic mechanism. His331 is a Zn(2+) binding site.

The protein belongs to the glutaminyl-peptide cyclotransferase family.

It localises to the secreted. It catalyses the reaction N-terminal L-glutaminyl-[peptide] = N-terminal 5-oxo-L-prolyl-[peptide] + NH4(+). Its function is as follows. Responsible for the biosynthesis of pyroglutamyl peptides. Has a bias against acidic and tryptophan residues adjacent to the N-terminal glutaminyl residue and a lack of importance of chain length after the second residue. The chain is Glutaminyl-peptide cyclotransferase (Qpct) from Mus musculus (Mouse).